A 97-amino-acid chain; its full sequence is Protein ParC (97 aa).

This Escherichia coli protein is Protein ParC (parC).